Here is a 600-residue protein sequence, read N- to C-terminus: Arginine--tRNA ligase (600 aa).

A 'HIGH' region motif is present at residues 123-133 (PNVAKPMHVGH).

Belongs to the class-I aminoacyl-tRNA synthetase family. As to quaternary structure, monomer.

Its subcellular location is the cytoplasm. It carries out the reaction tRNA(Arg) + L-arginine + ATP = L-arginyl-tRNA(Arg) + AMP + diphosphate. The chain is Arginine--tRNA ligase from Caulobacter vibrioides (strain NA1000 / CB15N) (Caulobacter crescentus).